The following is a 246-amino-acid chain: Probable transcriptional regulatory protein ESA_01378 (246 aa).

This sequence belongs to the TACO1 family.

It is found in the cytoplasm. The chain is Probable transcriptional regulatory protein ESA_01378 from Cronobacter sakazakii (strain ATCC BAA-894) (Enterobacter sakazakii).